A 274-amino-acid chain; its full sequence is Bis(5'-nucleosyl)-tetraphosphatase, symmetrical (274 aa).

It belongs to the Ap4A hydrolase family.

The enzyme catalyses P(1),P(4)-bis(5'-adenosyl) tetraphosphate + H2O = 2 ADP + 2 H(+). In terms of biological role, hydrolyzes diadenosine 5',5'''-P1,P4-tetraphosphate to yield ADP. This Shewanella oneidensis (strain ATCC 700550 / JCM 31522 / CIP 106686 / LMG 19005 / NCIMB 14063 / MR-1) protein is Bis(5'-nucleosyl)-tetraphosphatase, symmetrical.